Consider the following 681-residue polypeptide: PWWP domain-containing DNA repair factor 3B (681 aa).

Polar residues predominate over residues Asn102–Val121. Disordered regions lie at residues Asn102 to Asp144, His166 to Lys200, and Gln285 to Ser304. Ser128 is modified (phosphoserine). Over residues Gln285–Gly302 the composition is skewed to polar residues. The PWWP domain occupies Thr377–Ala438.

This sequence belongs to the PWWP3A family.

This is PWWP domain-containing DNA repair factor 3B (Pwwp3b) from Mus musculus (Mouse).